The primary structure comprises 216 residues: Pyridoxine/pyridoxamine 5'-phosphate oxidase (216 aa).

Residues 12 to 15 (RREY) and lysine 70 contribute to the substrate site. FMN contacts are provided by residues 65–70 (RLVLLK), 80–81 (YT), arginine 86, lysine 87, and glutamine 109. The substrate site is built by tyrosine 127, arginine 131, and serine 135. FMN-binding positions include 144–145 (QS) and tryptophan 189. 195 to 197 (RMH) is a substrate binding site. Position 199 (arginine 199) interacts with FMN.

Belongs to the pyridoxamine 5'-phosphate oxidase family. Homodimer. It depends on FMN as a cofactor.

It carries out the reaction pyridoxamine 5'-phosphate + O2 + H2O = pyridoxal 5'-phosphate + H2O2 + NH4(+). The catalysed reaction is pyridoxine 5'-phosphate + O2 = pyridoxal 5'-phosphate + H2O2. The protein operates within cofactor metabolism; pyridoxal 5'-phosphate salvage; pyridoxal 5'-phosphate from pyridoxamine 5'-phosphate: step 1/1. It participates in cofactor metabolism; pyridoxal 5'-phosphate salvage; pyridoxal 5'-phosphate from pyridoxine 5'-phosphate: step 1/1. In terms of biological role, catalyzes the oxidation of either pyridoxine 5'-phosphate (PNP) or pyridoxamine 5'-phosphate (PMP) into pyridoxal 5'-phosphate (PLP). This is Pyridoxine/pyridoxamine 5'-phosphate oxidase from Sodalis glossinidius (strain morsitans).